The primary structure comprises 221 residues: MKMLEQLEKKLGYTFKDKSLLEKALTHVSYSKKEHYETLEFLGDALVNFFIVDLLVQYSPNKREGFLSPLKAYLISEEFFNLLAQKLELHKFIRIKRGKINETIIGDVFEALWAAVYIDSGRDANFTRELFYKLFKEDILSAIKEGRVKKDYKTILQEITQKRWKERPEYRLISVEGPHHKKKFIVEAKIKEYRTLGEGKSKKEAEQRAAEELIKLLEESE.

Positions 4–121 (LEQLEKKLGY…LWAAVYIDSG (118 aa)) constitute an RNase III domain. A Mg(2+)-binding site is contributed by glutamate 40. Aspartate 44 is an active-site residue. 2 residues coordinate Mg(2+): aspartate 107 and glutamate 110. Glutamate 110 is a catalytic residue. The DRBM domain occupies 151–219 (DYKTILQEIT…AEELIKLLEE (69 aa)).

Belongs to the ribonuclease III family. As to quaternary structure, homodimer. Requires Mg(2+) as cofactor.

Its subcellular location is the cytoplasm. It catalyses the reaction Endonucleolytic cleavage to 5'-phosphomonoester.. Functionally, digests double-stranded RNA. Involved in the processing of primary rRNA transcript to yield the immediate precursors to the large and small rRNAs (23S and 16S). Also processes some mRNAs, and tRNAs when they are encoded in the rRNA operon. Probably processes pre-crRNA and tracrRNA of type II CRISPR loci if present in the organism. This chain is Ribonuclease 3 (rnc), found in Aquifex aeolicus (strain VF5).